Reading from the N-terminus, the 94-residue chain is Cystatin-A3 (94 aa).

A Secondary area of contact motif is present at residues 46 to 50 (QLVNG).

Belongs to the cystatin family.

It is found in the cytoplasm. Its function is as follows. Intracellular thiol proteinase inhibitor. This is Cystatin-A3 (cpiC) from Dictyostelium discoideum (Social amoeba).